The primary structure comprises 732 residues: Protein kinase YpkA (732 aa).

Residues 136–408 form the Protein kinase domain; the sequence is VAETDKFAEG…SNEARLHEFL (273 aa). Residues 142 to 150 and Lys-163 each bind ATP; that span reads FAEGESHIS. Asp-270 (proton acceptor) is an active-site residue.

It belongs to the protein kinase superfamily. Ser/Thr protein kinase family.

The protein resides in the secreted. It carries out the reaction L-seryl-[protein] + ATP = O-phospho-L-seryl-[protein] + ADP + H(+). The catalysed reaction is L-threonyl-[protein] + ATP = O-phospho-L-threonyl-[protein] + ADP + H(+). Functionally, acts as a virulence determinant. The protein is Protein kinase YpkA (ypkA) of Yersinia pseudotuberculosis serotype I (strain IP32953).